Reading from the N-terminus, the 77-residue chain is Subtilisin-chymotrypsin inhibitor CI-1C (77 aa).

The protein belongs to the protease inhibitor I13 (potato type I serine protease inhibitor) family.

Functionally, inhibits both subtilisin and chymotrypsin. The sequence is that of Subtilisin-chymotrypsin inhibitor CI-1C from Hordeum vulgare (Barley).